The sequence spans 858 residues: MITSENTDNRATNLYKPSDIEGKWQKIWEDDNLYNTDEQASNKEKFYALSMFPYPSGNLHMGHVRNYVITDLIARFQRFQGKVVLHPMGWDAFGLPAENAAIERGINPDKWTKQNIAHMKSQLKLLGLSVDWDREFATCDENYYVWTQFLFLELHKAGLVYQKESEVNWDPIDNTVLANEQVDSEGKSWRSGAIVEKKLLTQWFLKITDYAEELLQDLEKLNEWPERVKIMQENWIGKSIGTNINFKIKEFKKEKIQVFTTRPDTLFGVTYLAISVNHPLIKKISDNKILSKLENLKIYLQESKDKDQKKIGIPTNLIAINPINSKEIPILIASYVLDEYGTGAVMGVPAHDERDFEFAKINSIDIKQVIIKEKDKITSQLTNAFTDNGFLINSNNFDGLNNSDAKKHISEHGERNGWAENKIQFRLRDWLISRQRYWGCPIPIIKCTNCGSVPVNKKDIPVRLPNEIKISSNKINSLGSNQSWINTTCPKCGNLASRETDTMDTFMCSSWYFLRYPSSKSLTKPFEKEKINKWLPVDQYVGGVEHAILHLLYARFLTKALRDNNLFDIDEPFKRLLTQGMVQSAAYKNSITGKYISPTDIKDITNPKDPKDNSKLEVLFEKMSKSKYNGIDPESVIKKYGADTARMFILFKAPPEKDLEWGDSDVEGQYRFLCRIWKLFLDYSNNDITHEADKLKKENESSLLKSINIAIKEISNDIKNNQFNTAISELMKFYNSISSNLNYVNKDLRRESLMKFCILLAPFAPHISDEIWHLIGNSKSVHLEKWPVFDEDALKENSFELVIQINGKVRDKINVEINISDDEIKEKTLIRPNVKKWIDNKTIRKIIIVKGRIINIVV.

Positions 53-63 (PYPSGNLHMGH) match the 'HIGH' region motif. The 'KMSKS' region signature appears at 622–626 (KMSKS). An ATP-binding site is contributed by lysine 625.

It belongs to the class-I aminoacyl-tRNA synthetase family.

The protein localises to the cytoplasm. The catalysed reaction is tRNA(Leu) + L-leucine + ATP = L-leucyl-tRNA(Leu) + AMP + diphosphate. The polypeptide is Leucine--tRNA ligase (Prochlorococcus marinus subsp. pastoris (strain CCMP1986 / NIES-2087 / MED4)).